Consider the following 634-residue polypeptide: SPARC-like protein 1 (634 aa).

Positions 1 to 16 (MKAVLLLLYALGIAAA) are cleaved as a signal peptide. Residues 50 to 335 (ADIEKHPNHK…DDSKHGASDD (286 aa)) are disordered. Residues 51 to 62 (DIEKHPNHKAEK) show a composition bias toward basic and acidic residues. Phosphoserine occurs at positions 68, 76, and 84. Over residues 73-83 (HEQSTEQDKTY) the composition is skewed to basic and acidic residues. Residues 89–99 (LKDEEDGDGDL) show a composition bias toward acidic residues. Polar residues predominate over residues 131–144 (TVSTPFVDSDQPAN). N-linked (GlcNAc...) asparagine glycosylation occurs at N144. Phosphoserine is present on residues S151 and S159. Composition is skewed to acidic residues over residues 189–198 (EKEEEEDPED) and 205–214 (NQEEEKEPPE). Polar residues predominate over residues 233–258 (QESSQPTQISKTKNDFEQGSQGQEGD). Phosphoserine is present on S259. Basic and acidic residues-rich tracts occupy residues 263-276 (GEDKAAGSKEHLPH) and 292-303 (GNRKDTDEEKAV). S333 and S340 each carry phosphoserine. The tract at residues 360–398 (EETPDESENRSEAGDNQGAKKAESSPNAEPSDEGNSRGH) is disordered. Positions 366-382 (SENRSEAGDNQGAKKAE) are enriched in basic and acidic residues. N-linked (GlcNAc...) asparagine glycosylation occurs at N368. 2 positions are modified to phosphoserine: S370 and S390. Residues 402-424 (SCMNFQCKRGHTCKTDQHGKPHC) form the Follistatin-like domain. Disulfide bonds link C403–C414, C408–C424, C426–C460, C432–C453, C442–C479, C485–C596, and C604–C620. The 62-residue stretch at 420–481 (GKPHCVCQDP…QLDYFGACKS (62 aa)) folds into the Kazal-like domain. A glycan (N-linked (GlcNAc...) asparagine) is linked at N446. Residues 592-627 (PMEHCITRFFEECDPNKDKHITLKEWGHCFGIKEED) form the EF-hand domain. Ca(2+) contacts are provided by D605, N607, D609, H611, and E616.

It belongs to the SPARC family. As to expression, expressed in many types of neurons in the brain.

It is found in the secreted. It localises to the extracellular space. Its subcellular location is the extracellular matrix. In Rattus norvegicus (Rat), this protein is SPARC-like protein 1 (Sparcl1).